A 434-amino-acid polypeptide reads, in one-letter code: Protein maelstrom homolog (434 aa).

Residues 4–73 constitute a DNA-binding region (HMG box); the sequence is RKASRNAYYF…AQGKDPGPSE (70 aa). The tract at residues 357–385 is disordered; that stretch reads SHFNSSNEEQRSNTPIGDYPSRAKISGQN.

The protein belongs to the maelstrom family. In terms of assembly, interacts with SMARCB1, SIN3B and DDX4. Interacts with piRNA-associated proteins TDRD1, PIWIL1 and PIWIL2. Interacts with TEX19. In terms of tissue distribution, testis-specific. Expressed in various cancer cell lines, probably due to demethylation of its promoter.

The protein localises to the cytoplasm. The protein resides in the nucleus. Plays a central role during spermatogenesis by repressing transposable elements and preventing their mobilization, which is essential for the germline integrity. Acts via the piRNA metabolic process, which mediates the repression of transposable elements during meiosis by forming complexes composed of piRNAs and Piwi proteins and governs the methylation and subsequent repression of transposons. Its association with piP-bodies suggests a participation in the secondary piRNAs metabolic process. Required for the localization of germ-cell factors to the meiotic nuage. This chain is Protein maelstrom homolog (MAEL), found in Homo sapiens (Human).